Here is a 1150-residue protein sequence, read N- to C-terminus: Cell division cycle and apoptosis regulator protein 1 (1150 aa).

Residues 1-249 form an interaction with AR region; sequence MAQFGGQKNP…TQPQPQSLLQ (249 aa). Disordered regions lie at residues 124 to 146 and 285 to 354; these read PTAQ…QPQK and IVSQ…SPRR. Over residues 134 to 146 the composition is skewed to low complexity; that stretch reads TPRSSQQQTQPQK. Positions 203 to 660 are interaction with GATA2; the sequence is QRIQTLPNQN…RALSSKGLKS (458 aa). Basic and acidic residues-rich tracts occupy residues 293–334 and 341–352; these read RRLD…ERSP and ERSPRRERERSP. Residue Ser-456 is modified to Phosphoserine. A coiled-coil region spans residues 594–618; the sequence is KQQLVEKLQGERKEADGEQDEEEKD. The interval 600–638 is disordered; that stretch reads KLQGERKEADGEQDEEEKDDGEAKEISTPTHWSKLDPKT. Acidic residues predominate over residues 610–621; sequence GEQDEEEKDDGE. Residue Thr-627 is modified to Phosphothreonine. An SAP domain is found at 636–670; sequence PKTMKVNDLRKELESRALSSKGLKSQLIARLTKQL. Lys-637 is covalently cross-linked (Glycyl lysine isopeptide (Lys-Gly) (interchain with G-Cter in ubiquitin)). The interval 643–1150 is interaction with GATA1; it reads DLRKELESRA…QKSKENGASV (508 aa). A Phosphothreonine modification is found at Thr-667. Composition is skewed to basic and acidic residues over residues 673–687, 694–713, 796–817, and 832–855; these read EEQK…KSEK, DRKS…EEIE, KEDK…KKEE, and SGDD…KDDS. 2 disordered regions span residues 673–713 and 796–915; these read EEQK…EEIE and KEDK…EKEK. Phosphoserine is present on residues Ser-685 and Ser-697. Positions 856 to 889 are enriched in acidic residues; it reads KDDDETEEDNNQDEYDPMEAEEAEDEEDDRDEEE. Thr-861 bears the Phosphothreonine mark. Over residues 890–915 the composition is skewed to basic and acidic residues; it reads MTKRDDKRDINRYCKERPSKDKEKEK. Residue Lys-1012 forms a Glycyl lysine isopeptide (Lys-Gly) (interchain with G-Cter in SUMO1); alternate linkage. A Glycyl lysine isopeptide (Lys-Gly) (interchain with G-Cter in SUMO2); alternate cross-link involves residue Lys-1012. Residues 1033–1114 are a coiled coil; that stretch reads DVGSLLQKLE…LQFENQMNKT (82 aa). Residues Lys-1067 and Lys-1135 each participate in a glycyl lysine isopeptide (Lys-Gly) (interchain with G-Cter in SUMO2) cross-link.

As to quaternary structure, directly interacts with ESR1, NR3C1 and p53/TP53. Interacts (via N-terminus) with CALCOCO1. Interacts with MED1. Interacts with GATA1. Interacts with AR and GATA2. Expressed in various epithelial cancer cell lines, including breast, colon, prostate, pancreatic and leukemia. Expression is regulated by growth factors.

It localises to the cytoplasm. Its subcellular location is the perinuclear region. Functionally, associates with components of the Mediator and p160 coactivator complexes that play a role as intermediaries transducing regulatory signals from upstream transcriptional activator proteins to basal transcription machinery at the core promoter. Recruited to endogenous nuclear receptor target genes in response to the appropriate hormone. Also functions as a p53 coactivator. May thus play an important role in transcriptional regulation. May be involved in apoptosis signaling in the presence of the reinoid CD437. Apoptosis induction involves sequestration of 14-3-3 protein(s) and mediated altered expression of multiple cell cycle regulatory genes including MYC, CCNB1 and CDKN1A. Plays a role in cell cycle progression and/or cell proliferation. In association with CALCOCO1 enhances GATA1- and MED1-mediated transcriptional activation from the gamma-globin promoter during erythroid differentiation of K562 erythroleukemia cells. Can act as a both a coactivator and corepressor of AR-mediated transcription. Contributes to chromatin looping and AR transcription complex assembly by stabilizing AR-GATA2 association on chromatin and facilitating MED1 and RNA polymerase II recruitment to AR-binding sites. May play an important role in the growth and tumorigenesis of prostate cancer cells. The polypeptide is Cell division cycle and apoptosis regulator protein 1 (CCAR1) (Homo sapiens (Human)).